Here is a 443-residue protein sequence, read N- to C-terminus: Methyl-coenzyme M reductase I subunit beta (443 aa).

Position 367 (Tyr367) interacts with coenzyme M. Residue Gly369 coordinates coenzyme B.

It belongs to the methyl-coenzyme M reductase beta subunit family. MCR is a hexamer of two alpha, two beta, and two gamma chains, forming a dimer of heterotrimers. Requires coenzyme F430 as cofactor.

The protein resides in the cytoplasm. It carries out the reaction coenzyme B + methyl-coenzyme M = methane + coenzyme M-coenzyme B heterodisulfide. The protein operates within one-carbon metabolism; methyl-coenzyme M reduction; methane from methyl-coenzyme M: step 1/1. Functionally, component of the methyl-coenzyme M reductase (MCR) I that catalyzes the reductive cleavage of methyl-coenzyme M (CoM-S-CH3 or 2-(methylthio)ethanesulfonate) using coenzyme B (CoB or 7-mercaptoheptanoylthreonine phosphate) as reductant which results in the production of methane and the mixed heterodisulfide of CoB and CoM (CoM-S-S-CoB). This is the final step in methanogenesis. The sequence is that of Methyl-coenzyme M reductase I subunit beta (mcrB) from Methanothermobacter thermautotrophicus (strain ATCC 29096 / DSM 1053 / JCM 10044 / NBRC 100330 / Delta H) (Methanobacterium thermoautotrophicum).